Consider the following 986-residue polypeptide: Anoctamin-1 (986 aa).

Over 1 to 333 the chain is Cytoplasmic; sequence MRVNEKYSTL…FGEKIGLYFA (333 aa). The interval 79-121 is disordered; sequence LVRRVQHSDTPSGARSVKQDHPLPGKGASLDAGSGEPPMDYHE. Residues S107 and S196 each carry the phosphoserine modification. Residues 334–354 traverse the membrane as a helical segment; sequence WLGVYTQMLIPASIVGIIVFL. The Extracellular portion of the chain corresponds to 355-406; it reads YGCATMDENIPSMEMCDQRHNITMCPLCDKTCSYWKMSSACATARASHLFDN. Cystine bridges form between C370–C395, C379–C862, C382–C386, and C651–C656. Residues 407–427 form a helical membrane-spanning segment; sequence PATVFFSVFMALWAATFMEHW. E425 serves as a coordination point for Ca(2+). The Cytoplasmic segment spans residues 428–519; sequence KRKQMRLNYR…RDRFPAYLTN (92 aa). The chain crosses the membrane as a helical span at residues 520–540; sequence LVSIIFMIAVTFAIVLGVIIY. Topologically, residues 541 to 568 are extracellular; it reads RISMAAALAMNSSPSVRSNIRVTVTATA. A helical membrane pass occupies residues 569–589; that stretch reads VIINLVVIILLDEVYGCIARW. Over 590–607 the chain is Cytoplasmic; it reads LTKIEVPKTEKSFEERLI. The helical transmembrane segment at 608 to 628 threads the bilayer; that stretch reads FKAFLLKFVNSYTPIFYVAFF. At 629 to 657 the chain is on the extracellular side; it reads KGRFVGRPGDYVYIFRSFRMEECAPGGCL. A helical transmembrane segment spans residues 658 to 678; the sequence is MELCIQLSIIMLGKQLIQNNL. Positions 677, 680, 728, 731, 760, and 764 each coordinate Ca(2+). Topologically, residues 679 to 725 are cytoplasmic; the sequence is FEIGIPKMKKLIRYLKLKQQSPPDHEECVKRKQRYEVDYNLEPFAGL. 2 helical membrane passes run 726-746 and 747-767; these read TPEY…VASF and PLAP…DAKK. Residues 768–784 lie on the Cytoplasmic side of the membrane; sequence FVTELRRPVAVRAKDIG. A helical membrane pass occupies residues 785–805; it reads IWYNILRGIGKLAVIINAFVI. Residues 806–892 are Extracellular-facing; the sequence is SFTSDFIPRL…FWAVLAARLA (87 aa). Residue N832 is glycosylated (N-linked (GlcNAc...) asparagine). The helical transmembrane segment at 893–913 threads the bilayer; sequence FVIVFQNLVMFMSDFVDWVIP. Ca(2+) is bound by residues D909 and D914. Residues 914-986 are Cytoplasmic-facing; that stretch reads DIPKDISQQI…PSHAYHGGVL (73 aa). Over residues 951–960 the composition is skewed to basic and acidic residues; it reads KERQKDEPPC. A disordered region spans residues 951–986; the sequence is KERQKDEPPCNHHNTKACPDSLGSPAPSHAYHGGVL.

This sequence belongs to the anoctamin family. In terms of assembly, homodimer. Interacts with CFTR. Interacts with TRPV4. In terms of tissue distribution, expressed in nasal epithelial cells (at protein level). In the kidney, expressed in the collecting duct (at protein level). Broadly expressed with higher levels in liver, skeletal muscle and gastrointestinal muscles. Expressed in eccrine sweat glands.

Its subcellular location is the apical cell membrane. It is found in the presynapse. The enzyme catalyses chloride(in) = chloride(out). With respect to regulation, ATP and calmodulin are essential for its activation. Channel activity is inhibited by CFTR protein and by chloride inhibitors such as niflumic acid (NFA) and 4,4'-diisothiocyanatostilbene-2,2'-disulfonic acid (DIDS). Activated by heat with activation seen at temperatures above 44 degrees Celsius. Activated by BDNF in radial glial cells. Its function is as follows. Calcium-activated chloride channel (CaCC). Plays a role in transepithelial anion transport and smooth muscle contraction. Required for the normal functioning of the interstitial cells of Cajal (ICCs) which generate electrical pacemaker activity in gastrointestinal smooth muscles. Acts as a major contributor to basal and stimulated chloride conductance in airway epithelial cells and plays an important role in tracheal cartilage development. Required for CFTR activation by enhancing endoplasmic reticulum Ca(2+) store release and is also required for CFTR membrane expression. Required for basal and ATP-dependent mucus secretion in airways and intestine, probably by controlling exocytosis of mucus-filled granules by providing Ca(2+) to an apical signaling compartment. Contributes to airway mucus expression induced by interleukins IL3 and IL8 and by the asthma-associated protein CLCA1 and is required for expression of mucin MUC5AC. However, was shown in another study not to be required for MUC5AC expression. Plays a role in the propagation of Ca(2+) waves in Kolliker's organ in the cochlea and contributes to the refinement of auditory brainstem circuitries prior to hearing onset. In vomeronasal sensory neurons, modulates spontaneous firing patterns in the absence of stimuli as well as the firing pattern of pheromone-evoked activity. Responsible for calcium-activated chloride channel activity in type I taste cells of the vallate papillae. Acts as a heat sensor in nociceptive neurons. In dorsal root ganglion neurons, plays a role in mediating non-histaminergic Mas-related G-protein coupled receptor (MRGPR)-dependent itching, acting as a downstream effector of MRGPRs. In the developing brain, required for the Ca(2+)-dependent process extension of radial glial cells. Calcium-activated chloride channel (CaCC). Contributes to calcium-activated chloride secretion in human sweat gland epithelial cells. Shows increased basal chloride permeability and decreased Ca(2+)-induced chloride permeability. Functionally, calcium-activated chloride channel (CaCC). Shows increased sensitivity to intracellular Ca(2+). The polypeptide is Anoctamin-1 (ANO1) (Homo sapiens (Human)).